A 249-amino-acid chain; its full sequence is Cobalt-precorrin-6A reductase (249 aa).

It belongs to the precorrin-6x reductase family.

It carries out the reaction Co-precorrin-6B + NAD(+) = Co-precorrin-6A + NADH + H(+). It functions in the pathway cofactor biosynthesis; adenosylcobalamin biosynthesis; cob(II)yrinate a,c-diamide from sirohydrochlorin (anaerobic route): step 7/10. Functionally, catalyzes the reduction of the macrocycle of cobalt-precorrin-6A to cobalt-precorrin-6B. This chain is Cobalt-precorrin-6A reductase (cbiJ), found in Methanocaldococcus jannaschii (strain ATCC 43067 / DSM 2661 / JAL-1 / JCM 10045 / NBRC 100440) (Methanococcus jannaschii).